The primary structure comprises 517 residues: Crotonobetaine/carnitine--CoA ligase (517 aa).

This sequence belongs to the ATP-dependent AMP-binding enzyme family.

The enzyme catalyses 4-(trimethylamino)butanoate + ATP + CoA = 4-(trimethylamino)butanoyl-CoA + AMP + diphosphate. The catalysed reaction is crotonobetaine + ATP + CoA = crotonobetainyl-CoA + AMP + diphosphate. It catalyses the reaction (R)-carnitine + ATP + CoA = (R)-carnitinyl-CoA + AMP + diphosphate. It functions in the pathway amine and polyamine metabolism; carnitine metabolism. Functionally, catalyzes the transfer of CoA to carnitine, generating the initial carnitinyl-CoA needed for the CaiB reaction cycle. Also has activity toward crotonobetaine and gamma-butyrobetaine. The sequence is that of Crotonobetaine/carnitine--CoA ligase from Escherichia coli O6:K15:H31 (strain 536 / UPEC).